The following is a 327-amino-acid chain: Biotin synthase (327 aa).

The 234-residue stretch at 49–282 folds into the Radical SAM core domain; it reads FNKDKIDLCS…NKVIRLCGGR (234 aa). [4Fe-4S] cluster-binding residues include C67, C71, and C74. Residues S110, C142, C201, and R277 each contribute to the [2Fe-2S] cluster site.

The protein belongs to the radical SAM superfamily. Biotin synthase family. Homodimer. [4Fe-4S] cluster is required as a cofactor. [2Fe-2S] cluster serves as cofactor.

It carries out the reaction (4R,5S)-dethiobiotin + (sulfur carrier)-SH + 2 reduced [2Fe-2S]-[ferredoxin] + 2 S-adenosyl-L-methionine = (sulfur carrier)-H + biotin + 2 5'-deoxyadenosine + 2 L-methionine + 2 oxidized [2Fe-2S]-[ferredoxin]. It functions in the pathway cofactor biosynthesis; biotin biosynthesis; biotin from 7,8-diaminononanoate: step 2/2. Its function is as follows. Catalyzes the conversion of dethiobiotin (DTB) to biotin by the insertion of a sulfur atom into dethiobiotin via a radical-based mechanism. In Methanococcus maripaludis (strain C5 / ATCC BAA-1333), this protein is Biotin synthase.